The primary structure comprises 640 residues: 1-deoxy-D-xylulose-5-phosphate synthase (640 aa).

Thiamine diphosphate contacts are provided by residues His79 and 120–122 (GHS). Mg(2+) is bound at residue Asp151. Thiamine diphosphate is bound by residues 152–153 (GG), Asn180, Tyr288, and Glu372. Asn180 is a binding site for Mg(2+).

Belongs to the transketolase family. DXPS subfamily. As to quaternary structure, homodimer. Requires Mg(2+) as cofactor. The cofactor is thiamine diphosphate.

The catalysed reaction is D-glyceraldehyde 3-phosphate + pyruvate + H(+) = 1-deoxy-D-xylulose 5-phosphate + CO2. It functions in the pathway metabolic intermediate biosynthesis; 1-deoxy-D-xylulose 5-phosphate biosynthesis; 1-deoxy-D-xylulose 5-phosphate from D-glyceraldehyde 3-phosphate and pyruvate: step 1/1. Its function is as follows. Catalyzes the acyloin condensation reaction between C atoms 2 and 3 of pyruvate and glyceraldehyde 3-phosphate to yield 1-deoxy-D-xylulose-5-phosphate (DXP). This Nitrosococcus oceani (strain ATCC 19707 / BCRC 17464 / JCM 30415 / NCIMB 11848 / C-107) protein is 1-deoxy-D-xylulose-5-phosphate synthase.